A 351-amino-acid polypeptide reads, in one-letter code: Purine permease 3 (351 aa).

The next 10 helical transmembrane spans lie at 4-24 (ALVIINCIILAIGNCGGPLIM), 35-55 (IWFSTFLETAGFPVIFIPLLF), 72-92 (FFLIKPRLLIAAVIVGILSGF), 108-128 (TAALIIASQLAFIAIFSFFMV), 132-152 (FTPFTINAVVLLTVGAAVLGM), 168-188 (ITGFLITVAAAVMYAFILPLV), 207-227 (FQLILCLLASIVSVIGMFIAG), 249-269 (VAVFSAIIWQGFFLGAIGLIF), 274-294 (LVSGIMISVLLPITEVLAVIF), and 304-324 (GLSLALSLWGFVSYFYGEIKS). In terms of domain architecture, EamA spans 45–152 (GFPVIFIPLL…LTVGAAVLGM (108 aa)). Positions 329–351 (RRIQQEESQETEQSSLSRPISEC) are disordered.

Belongs to the purine permeases (TC 2.A.7.14) family. Restricted to pollen.

It localises to the membrane. In terms of biological role, may be involved in transport of purine derivatives during pollen germination and tube elongation. The protein is Purine permease 3 (PUP3) of Arabidopsis thaliana (Mouse-ear cress).